Here is a 753-residue protein sequence, read N- to C-terminus: Fatty acid oxidation complex subunit alpha (753 aa).

The segment at 8-197 is enoyl-CoA hydratase; the sequence is SVTHPAFTLN…KMGLVDDVVP (190 aa). A 3-hydroxyacyl-CoA dehydrogenase region spans residues 313 to 747; the sequence is RAIHRVGVLG…FYPVDANIDE (435 aa). A disordered region spans residues 593–622; that stretch reads SNPTLHSNSTKNSSPTKNGNSPAKRNSFKW. Low complexity predominate over residues 599 to 614; that stretch reads SNSTKNSSPTKNGNSP.

The protein in the N-terminal section; belongs to the enoyl-CoA hydratase/isomerase family. In the central section; belongs to the 3-hydroxyacyl-CoA dehydrogenase family. Heterotetramer of two alpha chains (FadJ) and two beta chains (FadI).

It localises to the cytoplasm. The catalysed reaction is a (3S)-3-hydroxyacyl-CoA = a (2E)-enoyl-CoA + H2O. It carries out the reaction a 4-saturated-(3S)-3-hydroxyacyl-CoA = a (3E)-enoyl-CoA + H2O. It catalyses the reaction a (3S)-3-hydroxyacyl-CoA + NAD(+) = a 3-oxoacyl-CoA + NADH + H(+). The enzyme catalyses (3S)-3-hydroxybutanoyl-CoA = (3R)-3-hydroxybutanoyl-CoA. Its pathway is lipid metabolism; fatty acid beta-oxidation. Catalyzes the formation of a hydroxyacyl-CoA by addition of water on enoyl-CoA. Also exhibits 3-hydroxyacyl-CoA epimerase and 3-hydroxyacyl-CoA dehydrogenase activities. The sequence is that of Fatty acid oxidation complex subunit alpha from Yersinia pseudotuberculosis serotype I (strain IP32953).